The following is a 54-amino-acid chain: Large ribosomal subunit protein bL33 (54 aa).

It belongs to the bacterial ribosomal protein bL33 family.

This chain is Large ribosomal subunit protein bL33, found in Chloroflexus aggregans (strain MD-66 / DSM 9485).